The following is a 421-amino-acid chain: CaM kinase-like vesicle-associated protein (421 aa).

Positions 24–284 (YDLGQVVKSE…AQEAIAHEWI (261 aa)) constitute a Protein kinase domain. The tract at residues 326–421 (ASEQGDTGAS…PQMLPQRKGY (96 aa)) is disordered. Low complexity-rich tracts occupy residues 330–340 (GDTGASGLAAG) and 390–406 (QQQA…QQAR).

The protein belongs to the protein kinase superfamily. CAMK Ser/Thr protein kinase family. Interacts with calmodulin, in the presence of calcium. Ca(2+) serves as cofactor. Ubiquitously expressed.

It is found in the cytoplasmic vesicle membrane. Does not appear to have detectable kinase activity. The polypeptide is CaM kinase-like vesicle-associated protein (camkv) (Takifugu rubripes (Japanese pufferfish)).